A 258-amino-acid chain; its full sequence is Leucine-rich repeat-containing protein 3B (258 aa).

An N-terminal signal peptide occupies residues 1–33; sequence MTPLDLWLSRSIPMCLLLQSLVLMVLCFPSAST. The 35-residue stretch at 34 to 68 folds into the LRRNT domain; the sequence is CPKGCTCQRSESPPHGLNVTCSLSRLKEIPPDVPP. N-linked (GlcNAc...) asparagine glycosylation occurs at Asn51. LRR repeat units lie at residues 69–90, 93–114, and 118–139; these read DTQLLQLDRNHISLVPDRIFHG, MLRRLNLSHNAVETLGEGAFIG, and SLEVLDLSYNRITSVHKDAFAR. An N-linked (GlcNAc...) asparagine glycan is attached at Asn98. The LRRCT domain occupies 149–196; the sequence is NPWHCDCALQQALGGMAHNHERVLCRSSELRDQEGQPFMAVDADLCNL. A helical transmembrane segment spans residues 204–224; the sequence is AMLVTMFGWFAMVISYVVYYV.

It belongs to the LRRC3 family.

Its subcellular location is the membrane. The chain is Leucine-rich repeat-containing protein 3B (lrrc3b) from Danio rerio (Zebrafish).